We begin with the raw amino-acid sequence, 633 residues long: Pentatricopeptide repeat-containing protein At3g24000, mitochondrial (633 aa).

The transit peptide at 1 to 63 (MALRFPPRLL…SYIPADRRFY (63 aa)) directs the protein to the mitochondrion. PPR repeat units follow at residues 94–124 (DIVMGNTLLNMYAKCGSLEEARKVFEKMPQR), 125–159 (DFVTWTTLISGYSQHDRPCDALLFFNQMLRFGYSP), 160–194 (NEFTLSSVIKAAAAERRGCCGHQLHGFCVKCGFDS), 195–225 (NVHVGSALLDLYTRYGLMDDAQLVFDALESR), 226–260 (NDVSWNALIAGHARRSGTEKALELFQGMLRDGFRP), 261–295 (SHFSYASLFGACSSTGFLEQGKWVHAYMIKSGEKL), 296–326 (VAFAGNTLLDMYAKSGSIHDARKIFDRLAKR), 327–361 (DVVSWNSLLTAYAQHGFGKEAVWWFEEMRRVGIRP), 362–396 (NEISFLSVLTACSHSGLLDEGWHYYELMKKDGIVP), and 397–431 (EAWHYVTVVDLLGRAGDLNRALRFIEEMPIEPTAA). Positions 432-507 (IWKALLNACR…EPACSWVEIE (76 aa)) are type E motif. A type E(+) motif region spans residues 508–538 (NAIHMFVANDERHPQREEIARKWEEVLAKIK). Residues 539 to 633 (ELGYVPDTSH…DGNCSCKDYW (95 aa)) are type DYW motif.

Belongs to the PPR family. PCMP-H subfamily.

It is found in the mitochondrion. The sequence is that of Pentatricopeptide repeat-containing protein At3g24000, mitochondrial (PCMP-H87) from Arabidopsis thaliana (Mouse-ear cress).